The primary structure comprises 39 residues: Cytochrome b559 subunit beta (39 aa).

Residues 14 to 30 traverse the membrane as a helical segment; it reads WLAIHGLAVPTVSFLGS. Residue H18 participates in heme binding.

It belongs to the PsbE/PsbF family. In terms of assembly, heterodimer of an alpha subunit and a beta subunit. PSII is composed of 1 copy each of membrane proteins PsbA, PsbB, PsbC, PsbD, PsbE, PsbF, PsbH, PsbI, PsbJ, PsbK, PsbL, PsbM, PsbT, PsbX, PsbY, PsbZ, Psb30/Ycf12, at least 3 peripheral proteins of the oxygen-evolving complex and a large number of cofactors. It forms dimeric complexes. The cofactor is heme b.

It localises to the plastid. The protein localises to the chloroplast thylakoid membrane. Its function is as follows. This b-type cytochrome is tightly associated with the reaction center of photosystem II (PSII). PSII is a light-driven water:plastoquinone oxidoreductase that uses light energy to abstract electrons from H(2)O, generating O(2) and a proton gradient subsequently used for ATP formation. It consists of a core antenna complex that captures photons, and an electron transfer chain that converts photonic excitation into a charge separation. The polypeptide is Cytochrome b559 subunit beta (Allium textile (Textile onion)).